Reading from the N-terminus, the 173-residue chain is Bacterial deubiquitinase-like protein BilC (173 aa).

Zn(2+) is bound by residues His-103, His-105, and Asp-115.

The protein belongs to the M67B family. Requires Zn(2+) as cofactor.

Component of the Bil (bacterial ISG15-like) antiviral defense system, composed of BilA, BilB, BilC and BilD. The Bil system specifically conjugates a ubiquitin-like moiety (bilA) to the bacteriophage central tail fiber (CTF, or tip attachment protein J) via reactions involving E1 (bilD) and E2 (bilB). Modifies CTF of phage SECphi27 and SECphi4, which probably interferes with assembly of the phage tail. Also modifies T5 baseplate hub protein pb3 (gene D16), but not gp27 of phage T6 (Bil defends against T6). BilC is a probable metalloprotease that may cleave non-specifically conjugated targets. Bil-encoding bacteria produce mostly defective phage SECphi27, many of which have phage assembly defects, including no tails. SECphi27 phage progeny produced in E.coli with the Bil system inject less DNA into naive host cells, maybe because the phage are less able to adsorb and inject their DNA into host cells. In terms of biological role, expression of the Bil system in E.coli (strain MG1655) confers about 100-fold resistance to phage SECphi27, SECphi18, SECphi6, SECphi4 and T5, but not to SECphi17. When cells expressing the Bil system are infected by phage SECphi27 at low multiplicity of infection (0.03 MOI) the culture survives, at 3.0 MOI the culture collapses at the same time as cells without the Bil system. Its function is as follows. Cleaves a ubiquitin-GFP (Ubl-GFP) fusion protein in vivo. This is Bacterial deubiquitinase-like protein BilC from Collimonas sp. (strain OK412).